We begin with the raw amino-acid sequence, 190 residues long: MADMIEAKSLRSGQTIFGPNKEILLVLENTFNKTAMRQGIVKTKVKNLRTGAIVWIEFTGDKLEQVIIDKKKMTFLYKDGANYVFMDQQDYSQIEIPEKQLEWEKNFITEDSEVTIISYQSEILGVNLPELVPIEVEFAEEAVQGNTANMARKRARLVSGYELDVPQFIRTGDKIVISTIDGSYRERYNK.

Belongs to the elongation factor P family.

Its subcellular location is the cytoplasm. Its pathway is protein biosynthesis; polypeptide chain elongation. Functionally, involved in peptide bond synthesis. Stimulates efficient translation and peptide-bond synthesis on native or reconstituted 70S ribosomes in vitro. Probably functions indirectly by altering the affinity of the ribosome for aminoacyl-tRNA, thus increasing their reactivity as acceptors for peptidyl transferase. This chain is Elongation factor P (efp), found in Mycoplasma pneumoniae (strain ATCC 29342 / M129 / Subtype 1) (Mycoplasmoides pneumoniae).